A 938-amino-acid polypeptide reads, in one-letter code: Chaperone protein ClpD1, chloroplastic (938 aa).

The N-terminal 83 residues, 1–83 (MEVCCCSTSS…FERFTERAVK (83 aa)), are a transit peptide targeting the chloroplast. Repeat regions lie at residues 84–145 (AVVL…TPGA) and 159–224 (FSGS…LQAE). The Clp R domain occupies 84-224 (AVVLSQREAK…SVALTRLQAE (141 aa)). A disordered region spans residues 234 to 255 (GASSFKVPKKSPAGAGRSAFSK). An i region spans residues 266–519 (LDQFCLDLTT…RMESFNRKKE (254 aa)). ATP-binding positions include 311–318 (GEAGVGKT) and 660–667 (GPTGVGKT). Positions 586-777 (VGTEEIARVA…LIVMTSNIGS (192 aa)) are II.

The protein belongs to the ClpA/ClpB family. ClpD subfamily. Expressed in stems, culms and leaves.

The protein resides in the plastid. It localises to the chloroplast. Molecular chaperone that may function in heat stress response. May interact with a ClpP-like protease involved in degradation of denatured proteins in the chloroplast. Chaperone involved in response to abiotic stresses. Plays a positive role during dehydration and salt stress. This Oryza sativa subsp. japonica (Rice) protein is Chaperone protein ClpD1, chloroplastic.